The chain runs to 196 residues: ATP-dependent Clp protease proteolytic subunit (196 aa).

The active-site Nucleophile is Ser-96. The active site involves His-121.

Belongs to the peptidase S14 family. In terms of assembly, fourteen ClpP subunits assemble into 2 heptameric rings which stack back to back to give a disk-like structure with a central cavity, resembling the structure of eukaryotic proteasomes.

It is found in the cytoplasm. It carries out the reaction Hydrolysis of proteins to small peptides in the presence of ATP and magnesium. alpha-casein is the usual test substrate. In the absence of ATP, only oligopeptides shorter than five residues are hydrolyzed (such as succinyl-Leu-Tyr-|-NHMec, and Leu-Tyr-Leu-|-Tyr-Trp, in which cleavage of the -Tyr-|-Leu- and -Tyr-|-Trp bonds also occurs).. Functionally, cleaves peptides in various proteins in a process that requires ATP hydrolysis. Has a chymotrypsin-like activity. Plays a major role in the degradation of misfolded proteins. The polypeptide is ATP-dependent Clp protease proteolytic subunit (Streptococcus pyogenes serotype M3 (strain SSI-1)).